Here is a 963-residue protein sequence, read N- to C-terminus: Respiratory burst oxidase homolog protein A (963 aa).

The segment covering 1–12 has biased composition (basic and acidic residues); it reads MRGLPGHERRWT. Residues 1 to 36 are disordered; sequence MRGLPGHERRWTSDTVSSGKDLSGESSPGTDSGNIS. The Cytoplasmic portion of the chain corresponds to 1 to 399; that stretch reads MRGLPGHERR…VYSLQENWKR (399 aa). The segment covering 13-36 has biased composition (polar residues); the sequence is SDTVSSGKDLSGESSPGTDSGNIS. 2 EF-hand-like regions span residues 219–227 and 253–264; these read AKDGYLYRS and RRLKVDKISKEE. An EF-hand domain is found at 276–311; it reads SFDSRLQIFFDMVDKNEDGRIGEEEVKEIIMLSASA. Ca(2+)-binding residues include aspartate 289, asparagine 291, aspartate 293, arginine 295, and glutamate 300. The helical transmembrane segment at 400-420 threads the bilayer; it reads IWVLVLWILIMIGLFLWKFYL. Topologically, residues 421-435 are extracellular; it reads YKQKSAFQVMGYCLL. Residues 436-456 form a helical membrane-spanning segment; it reads TAKGAAETLKFNMALILLPVC. Residues 438-595 enclose the Ferric oxidoreductase domain; the sequence is KGAAETLKFN…LLIIVYIVLI (158 aa). The Cytoplasmic segment spans residues 457–482; it reads RNTITFLRSTKLSCFVPFDDNINFHK. The helical transmembrane segment at 483–503 threads the bilayer; sequence TVAAAIVTGIILHAGNHLVCD. The Extracellular portion of the chain corresponds to 504 to 535; that stretch reads FPKLIHANNTNYQKYLVNDFGPSQPQYIDLVK. The chain crosses the membrane as a helical span at residues 536–556; sequence GVEGVTGIIMVILMAIAFTLA. Residues 557 to 583 are Cytoplasmic-facing; the sequence is TRWFRRSLIKFPKPFDRLTGFNAFWYS. A helical transmembrane segment spans residues 584-604; that stretch reads HHLLIIVYIVLIIHGTFLYLV. Over 605-759 the chain is Extracellular; the sequence is HNWYSKTTWM…APAQDYRKYD (155 aa). The FAD-binding FR-type domain occupies 634–754; the sequence is SGLYTVRLLK…DGPYGAPAQD (121 aa). A helical transmembrane segment spans residues 760-780; it reads VLLLVGLGIGATPFISILKDL. The Cytoplasmic segment spans residues 781 to 963; that stretch reads LKNIVTMEEQ…TKFEFHKEHF (183 aa).

It belongs to the RBOH (TC 5.B.1.3) family. Monomer and homodimer. Phosphorylated by CPK.

Its subcellular location is the cell membrane. Its function is as follows. Calcium-dependent NADPH oxidase that generates superoxide. Involved in the rapid and transient phase I oxidative burst induced by pathogen infection. The polypeptide is Respiratory burst oxidase homolog protein A (RBOHA) (Solanum tuberosum (Potato)).